A 103-amino-acid chain; its full sequence is Small ribosomal subunit protein uS10 (103 aa).

This sequence belongs to the universal ribosomal protein uS10 family. Part of the 30S ribosomal subunit.

Its function is as follows. Involved in the binding of tRNA to the ribosomes. The chain is Small ribosomal subunit protein uS10 from Rubrobacter xylanophilus (strain DSM 9941 / JCM 11954 / NBRC 16129 / PRD-1).